A 302-amino-acid polypeptide reads, in one-letter code: uncharacterized protein (302 aa).

Residues M1–P24 are disordered.

This is an uncharacterized protein from Schizosaccharomyces pombe (strain 972 / ATCC 24843) (Fission yeast).